Consider the following 616-residue polypeptide: Dihydroxy-acid dehydratase (616 aa).

Aspartate 81 is a Mg(2+) binding site. Residue cysteine 122 coordinates [2Fe-2S] cluster. Mg(2+)-binding residues include aspartate 123 and lysine 124. Lysine 124 is subject to N6-carboxylysine. Position 195 (cysteine 195) interacts with [2Fe-2S] cluster. Glutamate 491 contacts Mg(2+). The active-site Proton acceptor is the serine 517.

This sequence belongs to the IlvD/Edd family. Homodimer. [2Fe-2S] cluster serves as cofactor. It depends on Mg(2+) as a cofactor.

The enzyme catalyses (2R)-2,3-dihydroxy-3-methylbutanoate = 3-methyl-2-oxobutanoate + H2O. The catalysed reaction is (2R,3R)-2,3-dihydroxy-3-methylpentanoate = (S)-3-methyl-2-oxopentanoate + H2O. It participates in amino-acid biosynthesis; L-isoleucine biosynthesis; L-isoleucine from 2-oxobutanoate: step 3/4. The protein operates within amino-acid biosynthesis; L-valine biosynthesis; L-valine from pyruvate: step 3/4. Its function is as follows. Functions in the biosynthesis of branched-chain amino acids. Catalyzes the dehydration of (2R,3R)-2,3-dihydroxy-3-methylpentanoate (2,3-dihydroxy-3-methylvalerate) into 2-oxo-3-methylpentanoate (2-oxo-3-methylvalerate) and of (2R)-2,3-dihydroxy-3-methylbutanoate (2,3-dihydroxyisovalerate) into 2-oxo-3-methylbutanoate (2-oxoisovalerate), the penultimate precursor to L-isoleucine and L-valine, respectively. The protein is Dihydroxy-acid dehydratase of Escherichia coli (strain SMS-3-5 / SECEC).